Consider the following 231-residue polypeptide: Thymidylate kinase (231 aa).

Position 10-17 (10-17 (GGEGAGKT)) interacts with ATP.

This sequence belongs to the thymidylate kinase family.

The catalysed reaction is dTMP + ATP = dTDP + ADP. Functionally, phosphorylation of dTMP to form dTDP in both de novo and salvage pathways of dTTP synthesis. The protein is Thymidylate kinase of Acaryochloris marina (strain MBIC 11017).